The chain runs to 346 residues: L-glyceraldehyde 3-phosphate reductase (346 aa).

Trp33, Asp61, Tyr66, Ser168, Gln193, Thr223, Leu225, Gln227, Lys233, Ser303, Gln307, and Asn311 together coordinate NADP(+).

Belongs to the shaker potassium channel beta subunit family. As to quaternary structure, homotetramer. Homooctamer.

The enzyme catalyses a primary alcohol + NADP(+) = an aldehyde + NADPH + H(+). It catalyses the reaction hydroxyacetone + NADP(+) = methylglyoxal + NADPH + H(+). In terms of biological role, aldo-keto reductase that catalyzes the stereospecific, NADPH-dependent reduction of L-glyceraldehyde 3-phosphate (L-GAP) to L-glycerol 3-phosphate (L-G3P). The physiological role of Gpr is the detoxification of L-GAP, which may be formed via non-enzymatic and/or enzymatic racemization of D-GAP. Also contributes to cellular methylglyoxal detoxification by catalyzing the NADPH-dependent conversion of methylglyoxal to acetol. However, the catalytic efficiency of methylglyoxal reductase activity is more than 2 orders of magnitude lower than the L-GAP reductase activity. In addition, exhibits activity with glyoxal and probably plays a significant role in detoxification of glyoxal in vivo. Shows broad specificity and can use aromatic aldehydes such as 4-nitrobenzaldehyde and benzaldehyde, D,L-glyceraldehyde, phenylglyoxal, isatin and the model substrate 4-nitrobenzaldehyde. The chain is L-glyceraldehyde 3-phosphate reductase from Escherichia coli (strain K12).